Here is a 938-residue protein sequence, read N- to C-terminus: Histone deacetylase 7 (938 aa).

The segment at 1 to 40 is disordered; it reads MHSPGAGCPALQPDTPGSQPQPMDLRVGQRPTVEPPPEPA. The tract at residues 1 to 121 is interaction with MEF2C; sequence MHSPGAGCPA…LAEVILKKQQ (121 aa). Transcription repression stretches follow at residues 2-254 and 241-533; these read HSPG…DGDR and GPNP…EHAG. The interval 72–172 is interaction with MEF2A; sequence SMDPPMPELQ…LPTEPPEHFP (101 aa). Phosphoserine is present on Ser132. Disordered regions lie at residues 155-280, 331-361, 373-463, and 472-491; these read SFLP…HHGL, SGSGLHRPLNRTRSEPLPPSATASPLLAPLQ, LIKP…DSVL, and RPLSRTQSSPAAPVSLLSPE. Residue Ser178 is modified to Phosphoserine; by MARK2, MARK3 and PKD/PRKD1. Basic and acidic residues predominate over residues 190–204; it reads KSLERRKNPLLRKES. Residue Ser204 is modified to Phosphoserine; by PKD/PRKD2. Residues 220–235 show a composition bias toward low complexity; it reads SSPSSSSTPASGCSSP. Ser344 bears the Phosphoserine; by PKD/PRKD1 mark. Phosphoserine occurs at positions 350 and 398. Residues 350–361 show a composition bias toward low complexity; the sequence is SATASPLLAPLQ. Composition is skewed to low complexity over residues 429–448 and 479–491; these read GRGSISLQQHQQVPPWEQQH and SSPAAPVSLLSPE. Ser479 carries the phosphoserine; by PKD/PRKD1 modification. Position 480 is a phosphoserine (Ser480). A histone deacetylase region spans residues 505-852; sequence PATGLVYDSV…VAALLGNKVD (348 aa). Cys520, Cys522, and His528 together coordinate Zn(2+). Ser582 is modified (phosphoserine). Cys605 is a binding site for Zn(2+). The active site involves His657. The interaction with SIN3A stretch occupies residues 864–938; sequence NLSAIRSLEA…LVEEEEPMNL (75 aa). Positions 904 to 938 match the Nuclear export signal motif; sequence AEVEAVTALASLSVGILAEDRPSERLVEEEEPMNL.

Belongs to the histone deacetylase family. HD type 2 subfamily. In terms of assembly, interacts with HDAC1, HDAC2, HDAC3, HDAC4, HDAC5, NCOR1, NCOR2, SIN3A, SIN3B, RBBP4, RBBP7, MTA1L1, SAP30 and MBD3. Interacts with KAT5 and EDNRA. Interacts with the 14-3-3 protein YWHAE, MEF2A, MEF2B and MEF2C. Interacts with ZMYND15. Interacts with KDM5B. Interacts with PML. Interacts with FOXP3. Interacts with RARA. May be phosphorylated by CaMK1. Phosphorylated by the PKC kinases PKN1 and PKN2, impairing nuclear import. Phosphorylation at Ser-178 by MARK2, MARK3 and PRKD1 promotes interaction with 14-3-3 proteins and export from the nucleus. Phosphorylation at Ser-178 is a prerequisite for phosphorylation at Ser-204. In terms of tissue distribution, highly expressed in heart and lung. Expressed at intermediate level in muscle.

The protein resides in the nucleus. The protein localises to the cytoplasm. It catalyses the reaction N(6)-acetyl-L-lysyl-[histone] + H2O = L-lysyl-[histone] + acetate. The enzyme catalyses N(6)-acetyl-L-lysyl-[protein] + H2O = L-lysyl-[protein] + acetate. Its activity is regulated as follows. Its activity is inhibited by Trichostatin A (TSA), a known histone deacetylase inhibitor. Responsible for the deacetylation of lysine residues on the N-terminal part of the core histones (H2A, H2B, H3 and H4). Histone deacetylation gives a tag for epigenetic repression and plays an important role in transcriptional regulation, cell cycle progression and developmental events. Histone deacetylases act via the formation of large multiprotein complexes. Involved in muscle maturation by repressing transcription of myocyte enhancer factors such as MEF2A, MEF2B and MEF2C. During muscle differentiation, it shuttles into the cytoplasm, allowing the expression of myocyte enhancer factors. Positively regulates the transcriptional repressor activity of FOXP3. Serves as a corepressor of RARA, causing its deacetylation and inhibition of RARE DNA element binding. In association with RARA, plays a role in the repression of microRNA-10a and thereby in the inflammatory response. Also acetylates non-histone proteins, such as ALKBH5. This is Histone deacetylase 7 (Hdac7) from Mus musculus (Mouse).